A 609-amino-acid chain; its full sequence is Laccase-1 (609 aa).

An N-terminal signal peptide occupies residues 1–20; it reads MYLSTVLFPLLALNLGLSHA. Positions 45–141 constitute a Plastocyanin-like 1 domain; sequence VFTNGEYPGP…DGQVGAMYIR (97 aa). Residue Asn75 is glycosylated (N-linked (GlcNAc...) asparagine). His79, His81, His123, and His125 together coordinate Cu cation. Residue Asn257 is glycosylated (N-linked (GlcNAc...) asparagine). Residues 270 to 372 form the Plastocyanin-like 2 domain; that stretch reads TPSSVEPPVI…MSVYAILSYV (103 aa). Asn403, Asn443, and Asn486 each carry an N-linked (GlcNAc...) asparagine glycan. The region spanning 463-602 is the Plastocyanin-like 3 domain; the sequence is STPLLFEPDP…MGGMALALLD (140 aa). Cu cation is bound by residues His508, His511, and His513. Residues Asn531 and Asn546 are each glycosylated (N-linked (GlcNAc...) asparagine). The Cu cation site is built by His585, Cys586, His587, and His591.

Belongs to the multicopper oxidase family. Requires Cu cation as cofactor.

The protein localises to the secreted. It catalyses the reaction 4 hydroquinone + O2 = 4 benzosemiquinone + 2 H2O. Required for the conversion of the yellow polyketide pigment synthesized by wA to the conidial green pigment. The chain is Laccase-1 (yA) from Emericella nidulans (strain FGSC A4 / ATCC 38163 / CBS 112.46 / NRRL 194 / M139) (Aspergillus nidulans).